A 176-amino-acid polypeptide reads, in one-letter code: Inorganic pyrophosphatase (176 aa).

3 residues coordinate substrate: Lys-30, Arg-44, and Tyr-56. The Mg(2+) site is built by Asp-66, Asp-71, and Asp-103. Tyr-142 contacts substrate.

Belongs to the PPase family. Homohexamer. Mg(2+) is required as a cofactor.

It localises to the cytoplasm. The catalysed reaction is diphosphate + H2O = 2 phosphate + H(+). Catalyzes the hydrolysis of inorganic pyrophosphate (PPi) forming two phosphate ions. The sequence is that of Inorganic pyrophosphatase from Escherichia coli O157:H7.